A 386-amino-acid chain; its full sequence is Chaperone protein DnaJ (386 aa).

Positions 3-68 constitute a J domain; the sequence is DYYEILEVAR…KKRQVYDRYG (66 aa). A CR-type zinc finger spans residues 146–224; the sequence is GVDKELVISN…CKGQGAVKEK (79 aa). Residues Cys-159, Cys-162, Cys-176, Cys-179, Cys-198, Cys-201, Cys-212, and Cys-215 each contribute to the Zn(2+) site. CXXCXGXG motif repeat units lie at residues 159-166, 176-183, 198-205, and 212-219; these read CNVCNGKG, CSECKGRG, CPKCHGEG, and CKNCKGQG.

Belongs to the DnaJ family. Homodimer. The cofactor is Zn(2+).

Its subcellular location is the cytoplasm. Functionally, participates actively in the response to hyperosmotic and heat shock by preventing the aggregation of stress-denatured proteins and by disaggregating proteins, also in an autonomous, DnaK-independent fashion. Unfolded proteins bind initially to DnaJ; upon interaction with the DnaJ-bound protein, DnaK hydrolyzes its bound ATP, resulting in the formation of a stable complex. GrpE releases ADP from DnaK; ATP binding to DnaK triggers the release of the substrate protein, thus completing the reaction cycle. Several rounds of ATP-dependent interactions between DnaJ, DnaK and GrpE are required for fully efficient folding. Also involved, together with DnaK and GrpE, in the DNA replication of plasmids through activation of initiation proteins. This Protochlamydia amoebophila (strain UWE25) protein is Chaperone protein DnaJ.